The primary structure comprises 604 residues: UvrABC system protein C (604 aa).

The region spanning 10–89 (ELPGVYLMKD…VKKNRPHYNI (80 aa)) is the GIY-YIG domain. One can recognise a UVR domain in the interval 199-234 (SGTIKELQEKMNIHAIAQEYESAAVIRDQIDALKSL).

This sequence belongs to the UvrC family. In terms of assembly, interacts with UvrB in an incision complex.

Its subcellular location is the cytoplasm. Functionally, the UvrABC repair system catalyzes the recognition and processing of DNA lesions. UvrC both incises the 5' and 3' sides of the lesion. The N-terminal half is responsible for the 3' incision and the C-terminal half is responsible for the 5' incision. This chain is UvrABC system protein C, found in Methanococcoides burtonii (strain DSM 6242 / NBRC 107633 / OCM 468 / ACE-M).